The following is a 172-amino-acid chain: Crossover junction endodeoxyribonuclease RuvC (172 aa).

Catalysis depends on residues aspartate 12, glutamate 71, and aspartate 143. Mg(2+)-binding residues include aspartate 12, glutamate 71, and aspartate 143.

It belongs to the RuvC family. In terms of assembly, homodimer which binds Holliday junction (HJ) DNA. The HJ becomes 2-fold symmetrical on binding to RuvC with unstacked arms; it has a different conformation from HJ DNA in complex with RuvA. In the full resolvosome a probable DNA-RuvA(4)-RuvB(12)-RuvC(2) complex forms which resolves the HJ. Mg(2+) is required as a cofactor.

The protein resides in the cytoplasm. It catalyses the reaction Endonucleolytic cleavage at a junction such as a reciprocal single-stranded crossover between two homologous DNA duplexes (Holliday junction).. Its function is as follows. The RuvA-RuvB-RuvC complex processes Holliday junction (HJ) DNA during genetic recombination and DNA repair. Endonuclease that resolves HJ intermediates. Cleaves cruciform DNA by making single-stranded nicks across the HJ at symmetrical positions within the homologous arms, yielding a 5'-phosphate and a 3'-hydroxyl group; requires a central core of homology in the junction. The consensus cleavage sequence is 5'-(A/T)TT(C/G)-3'. Cleavage occurs on the 3'-side of the TT dinucleotide at the point of strand exchange. HJ branch migration catalyzed by RuvA-RuvB allows RuvC to scan DNA until it finds its consensus sequence, where it cleaves and resolves the cruciform DNA. This chain is Crossover junction endodeoxyribonuclease RuvC, found in Coxiella burnetii (strain CbuG_Q212) (Coxiella burnetii (strain Q212)).